The following is a 387-amino-acid chain: Synaptotagmin-8 (387 aa).

At 1–34 (MGHPPVSPSAPAPAGTTAIPGLIPDLVAGTPWPR) the chain is on the extracellular side. Residues 35–55 (WALIAGALAAGVLLVSCLLCA) traverse the membrane as a helical; Signal-anchor for type III membrane protein segment. The Cytoplasmic segment spans residues 56–387 (ACCCCRRHRK…LRLRLPLPHS (332 aa)). The tract at residues 70 to 99 (KESVGLGSARGTTTTHLVQPDVDGLESSPG) is disordered. 2 C2 domains span residues 103–219 (QWGC…EHWY) and 231–346 (QVGE…QHWA).

This sequence belongs to the synaptotagmin family. Homodimer or homooligomer. Homodimerization and homooligomerization do not depend on Ca(2+). Interacts with SYNCRIP isoform 2 C-terminus. Binds inositol 1,3,4,5-tetrakisphosphate (IP4). Binds to AP2 in a Ca(2+)-independent manner. Interacts with STX1A, STX1B and STX2; the interaction is Ca(2+)-dependent.

The protein localises to the cell membrane. The protein resides in the cytoplasmic vesicle. It is found in the secretory vesicle. Its subcellular location is the acrosome. In terms of biological role, involved in the trafficking and exocytosis of secretory vesicles in non-neuronal tissues. Mediates Ca(2+)-regulation of exocytosis acrosomal reaction in sperm. May mediate Ca(2+)-regulation of exocytosis in insulin secreted cells. The chain is Synaptotagmin-8 (SYT8) from Homo sapiens (Human).